The sequence spans 426 residues: Enolase (426 aa).

A (2R)-2-phosphoglycerate-binding site is contributed by Gln-162. The active-site Proton donor is the Glu-204. Asp-241, Glu-284, and Asp-311 together coordinate Mg(2+). Residues Lys-336, Arg-365, Ser-366, and Lys-387 each coordinate (2R)-2-phosphoglycerate. Lys-336 functions as the Proton acceptor in the catalytic mechanism.

This sequence belongs to the enolase family. Component of the RNA degradosome, a multiprotein complex involved in RNA processing and mRNA degradation. Mg(2+) is required as a cofactor.

The protein resides in the cytoplasm. Its subcellular location is the secreted. The protein localises to the cell surface. It carries out the reaction (2R)-2-phosphoglycerate = phosphoenolpyruvate + H2O. Its pathway is carbohydrate degradation; glycolysis; pyruvate from D-glyceraldehyde 3-phosphate: step 4/5. Its function is as follows. Catalyzes the reversible conversion of 2-phosphoglycerate (2-PG) into phosphoenolpyruvate (PEP). It is essential for the degradation of carbohydrates via glycolysis. The chain is Enolase from Thioalkalivibrio sulfidiphilus (strain HL-EbGR7).